Here is a 274-residue protein sequence, read N- to C-terminus: Basic leucine zipper transcriptional factor ATF-like 2 (274 aa).

Disordered stretches follow at residues 1–47 (MHLC…ALHQ), 128–151 (GSCYPAQPLSPGPQPHDSPSLLQC), and 187–229 (GSSS…PSSA). The 64-residue stretch at 17 to 80 (EQQRQLKKQK…AWWSRTLHVH (64 aa)) folds into the bZIP domain. The segment at 20–41 (RQLKKQKNRAAAQRSRQKHTDK) is basic motif. Positions 37-47 (KHTDKADALHQ) are enriched in basic and acidic residues. Positions 45 to 66 (LHQQHESLEKDNLALRKEIQSL) are leucine-zipper. Positions 187 to 196 (GSSSKLSALQ) are enriched in low complexity.

The protein belongs to the bZIP family. In terms of assembly, heterodimer; heterodimerizes with JUN family proteins.

It localises to the nucleus. AP-1 family transcription factor that controls the differentiation of lineage-specific cells in the immune system. Following infection, participates in the differentiation of CD8(+) thymic conventional dendritic cells in the immune system. Acts via the formation of a heterodimer with JUN family proteins that recognizes and binds DNA sequence 5'-TGA[CG]TCA-3' and regulates expression of target genes. Selectively suppresses CCN1 transcription and hence blocks the downstream cell proliferation signals produced by CCN1 and inhibits CCN1-induced anchorage-independent growth and invasion in several cancer types, such as breast cancer, malignant glioma and metastatic melanoma. Possibly acts by interfering with AP-1 binding to CCN1 promoter. The chain is Basic leucine zipper transcriptional factor ATF-like 2 (BATF2) from Homo sapiens (Human).